Reading from the N-terminus, the 298-residue chain is Fluorinase (298 aa).

S-adenosyl-L-methionine-binding positions include Asp-14, 19–21 (DDS), Tyr-75, Ser-156, Asp-209, Asn-214, 268–269 (SR), and 276–278 (RNA).

Belongs to the SAM hydrolase / SAM-dependent halogenase family.

The catalysed reaction is fluoride + S-adenosyl-L-methionine = 5'-deoxy-5'-fluoroadenosine + L-methionine. Catalyzes the formation of a C-F bond by combining S-adenosyl-L-methionine (SAM) and fluoride to generate 5'-fluoro-5'-deoxyadenosine (5'-FDA) and L-methionine. The sequence is that of Fluorinase from Actinoplanes sp. (strain N902-109).